The sequence spans 468 residues: Cysteine--tRNA ligase (468 aa).

Position 28 (C28) interacts with Zn(2+). Positions P30–N40 match the 'HIGH' region motif. Residues C212, H237, and E241 each contribute to the Zn(2+) site. Positions K271–S275 match the 'KMSKS' region motif. Residue K274 participates in ATP binding.

The protein belongs to the class-I aminoacyl-tRNA synthetase family. As to quaternary structure, monomer. Requires Zn(2+) as cofactor.

The protein resides in the cytoplasm. The enzyme catalyses tRNA(Cys) + L-cysteine + ATP = L-cysteinyl-tRNA(Cys) + AMP + diphosphate. This Latilactobacillus sakei subsp. sakei (strain 23K) (Lactobacillus sakei subsp. sakei) protein is Cysteine--tRNA ligase.